The chain runs to 280 residues: Meiotic driver wtf35 (280 aa).

Residues 1–29 are compositionally biased toward basic and acidic residues; that stretch reads MKNKDYPLRTSMDELSTKNDNEIDLEKGP. Disordered stretches follow at residues 1 to 49 and 64 to 100; these read MKNK…DLNN and NKSTTPPDYDENRLPITDEGNNPPNTHRENHSSGTTD. 4 helical membrane-spanning segments follow: residues 105-125, 142-162, 184-204, and 218-238; these read FLIKLLISFTSIILFNAPAVC, WTLIGFWCASSLIIFTFSWYF, IPMAFSEVFLFNILVGSPRVA, and SLADHIIFAILSILVFIVETV.

It belongs to the WTF family. As to quaternary structure, homomer. Forms protein aggregates. The two isoforms can interact with each other and with themselves. High sequence similarity is required for their interaction.

Its subcellular location is the spore membrane. It localises to the vacuole membrane. The protein resides in the ascus epiplasm. The protein localises to the cytoplasm. It is found in the endoplasmic reticulum membrane. Promotes unequal transmission of alleles from the parental zygote to progeny spores by acting as poison/antidote system where the poison and antidote proteins are produced from the same locus; the poison component is trans-acting and targets all spores within an ascus whereas the antidote component is spore-specific, leading to poisoning of all progeny that do not inherit the allele. In terms of biological role, localizes isoform 2 to the vacuole thereby facilitating its degradation. Functionally, forms toxic aggregates that disrupt spore maturation. The polypeptide is Meiotic driver wtf35 (Schizosaccharomyces pombe (Fission yeast)).